Here is a 347-residue protein sequence, read N- to C-terminus: Extracellular exo-alpha-(1-&gt;5)-L-arabinofuranosidase ArbA (347 aa).

The first 31 residues, 1–31, serve as a signal peptide directing secretion; that stretch reads MPTHHPITRQHWHHSWLSALALLCASLACGA. Asp35 is a substrate binding site. Asp38 (proton acceptor) is an active-site residue. Substrate contacts are provided by residues 90–92, 115–116, Asn155, Ser175, and Glu221; these read DGH and GK. Residue Glu221 is the Proton donor of the active site. His291 serves as a coordination point for Ca(2+). Position 316 (Gln316) interacts with substrate.

Belongs to the glycosyl hydrolase 43 family. In terms of assembly, homodimer.

The protein resides in the secreted. It carries out the reaction Hydrolysis of terminal non-reducing alpha-L-arabinofuranoside residues in alpha-L-arabinosides.. The protein operates within glycan metabolism; L-arabinan degradation. Its function is as follows. Involved in the degradation of arabinan and is a key enzyme in the complete degradation of the plant cell wall. Catalyzes the cleavage of the terminal alpha-(1-&gt;5)-arabinofuranosyl bonds of linear arabinan and carboxymethylarabinan to produce almost exclusively arabinotriose. The chain is Extracellular exo-alpha-(1-&gt;5)-L-arabinofuranosidase ArbA (arbA) from Cellvibrio japonicus (strain Ueda107) (Pseudomonas fluorescens subsp. cellulosa).